Here is an 833-residue protein sequence, read N- to C-terminus: Mannosyl-oligosaccharide glucosidase (833 aa).

The Cytoplasmic segment spans residues 1–10; that stretch reads MLISKSKMFK. The chain crosses the membrane as a helical; Signal-anchor for type II membrane protein span at residues 11–28; sequence TFWILTSIVLLASATVDI. The Lumenal portion of the chain corresponds to 29–833; that stretch reads SKLQEFEEYQ…ALVVNILGRF (805 aa). The substrate site is built by Asn-42 and Asn-122. Residues Asn-42, Asn-122, and Asn-135 are each glycosylated (N-linked (GlcNAc...) asparagine). A substrate-binding site is contributed by Glu-143. The active-site Proton donor is the Asp-601. A disulfide bridge links Cys-669 with Cys-685. Residue Asn-787 is glycosylated (N-linked (GlcNAc...) asparagine). Glu-804 acts as the Proton acceptor in catalysis.

It belongs to the glycosyl hydrolase 63 family. N-glycosylated.

The protein resides in the endoplasmic reticulum membrane. The catalysed reaction is N(4)-(alpha-D-Glc-(1-&gt;2)-alpha-D-Glc-(1-&gt;3)-alpha-D-Glc-(1-&gt;3)-alpha-D-Man-(1-&gt;2)-alpha-D-Man-(1-&gt;2)-alpha-D-Man-(1-&gt;3)-[alpha-D-Man-(1-&gt;2)-alpha-D-Man-(1-&gt;3)-[alpha-D-Man-(1-&gt;2)-alpha-D-Man-(1-&gt;6)]-alpha-D-Man-(1-&gt;6)]-beta-D-Man-(1-&gt;4)-beta-D-GlcNAc-(1-&gt;4)-beta-D-GlcNAc)-L-asparaginyl-[protein] + H2O = N(4)-(alpha-D-Glc-(1-&gt;3)-alpha-D-Glc-(1-&gt;3)-alpha-D-Man-(1-&gt;2)-alpha-D-Man-(1-&gt;2)-alpha-D-Man-(1-&gt;3)-[alpha-D-Man-(1-&gt;2)-alpha-D-Man-(1-&gt;3)-[alpha-D-Man-(1-&gt;2)-alpha-D-Man-(1-&gt;6)]-alpha-D-Man-(1-&gt;6)]-beta-D-Man-(1-&gt;4)-beta-D-GlcNAc-(1-&gt;4)-beta-D-GlcNAc)-L-asparaginyl-[protein] + beta-D-glucose. It functions in the pathway glycan metabolism; N-glycan degradation. Miglitol is an effective inhibitor at 1 mM. Cleaves the distal alpha 1,2-linked glucose residue from the Glc(3)Man(9)GlcNAc(2) oligosaccharide precursor highly specifically. Seems to play a role in beta-1,6-glucan synthesis. In Saccharomyces cerevisiae (strain ATCC 204508 / S288c) (Baker's yeast), this protein is Mannosyl-oligosaccharide glucosidase (CWH41).